The following is a 46-amino-acid chain: U-myrmeciitoxin(01)-Mg6a (46 aa).

An N-terminal signal peptide occupies residues 1–20 (MNLKTFCFFLLGIFVTLTVT). Positions 21–33 (VIPIANADAEADT) are excised as a propeptide.

In terms of processing, contains 1 disulfide bond. Expressed by the venom gland.

The protein resides in the secreted. This is U-myrmeciitoxin(01)-Mg6a from Myrmecia gulosa (Red bulldog ant).